A 393-amino-acid polypeptide reads, in one-letter code: Acetylornithine aminotransferase (393 aa).

Residues 96-97 and Phe-129 each bind pyridoxal 5'-phosphate; that span reads GT. N(2)-acetyl-L-ornithine is bound at residue Arg-132. 214 to 217 lines the pyridoxal 5'-phosphate pocket; sequence DEVQ. Lys-243 is modified (N6-(pyridoxal phosphate)lysine). Ser-271 is a N(2)-acetyl-L-ornithine binding site. Thr-272 lines the pyridoxal 5'-phosphate pocket.

This sequence belongs to the class-III pyridoxal-phosphate-dependent aminotransferase family. ArgD subfamily. In terms of assembly, homodimer. Pyridoxal 5'-phosphate is required as a cofactor.

The protein localises to the cytoplasm. The catalysed reaction is N(2)-acetyl-L-ornithine + 2-oxoglutarate = N-acetyl-L-glutamate 5-semialdehyde + L-glutamate. Its pathway is amino-acid biosynthesis; L-arginine biosynthesis; N(2)-acetyl-L-ornithine from L-glutamate: step 4/4. The sequence is that of Acetylornithine aminotransferase from Rhodobacter capsulatus (strain ATCC BAA-309 / NBRC 16581 / SB1003).